The sequence spans 592 residues: Probable oxidoreductase EphD (592 aa).

Residues 30–286 (PTVVLVHGFP…KAGHFSPMSH (257 aa)) enclose the AB hydrolase-1 domain. Ser-461 is a substrate binding site. The active-site Proton acceptor is the Tyr-474.

Belongs to the short-chain dehydrogenases/reductases (SDR) family.

The protein is Probable oxidoreductase EphD (ephD) of Mycobacterium bovis (strain ATCC BAA-935 / AF2122/97).